The chain runs to 351 residues: Probable NADP-dependent isopropanol dehydrogenase (351 aa).

C37, H59, E60, and D150 together coordinate Zn(2+). Residues 175–178, 198–200, 265–267, and K340 each bind NADP(+); these read AGPV, DSR, and VNY.

It belongs to the zinc-containing alcohol dehydrogenase family. Zn(2+) serves as cofactor.

It carries out the reaction propan-2-ol + NADP(+) = acetone + NADPH + H(+). In terms of biological role, alcohol dehydrogenase with a preference for medium chain secondary alcohols, such as 2-butanol and isopropanol. Has very low activity with primary alcohols, such as ethanol. Under physiological conditions, the enzyme reduces aldehydes and 2-ketones to produce secondary alcohols. Is also active with acetaldehyde and propionaldehyde. The chain is Probable NADP-dependent isopropanol dehydrogenase (adh) from Mycoplasma pneumoniae (strain ATCC 29342 / M129 / Subtype 1) (Mycoplasmoides pneumoniae).